The following is a 160-amino-acid chain: UPF0262 protein ELI_10965 (160 aa).

This sequence belongs to the UPF0262 family.

The polypeptide is UPF0262 protein ELI_10965 (Erythrobacter litoralis (strain HTCC2594)).